A 416-amino-acid chain; its full sequence is Serine hydroxymethyltransferase 1 (416 aa).

(6S)-5,6,7,8-tetrahydrofolate-binding positions include Leu-121 and 125-127 (GHL). At Lys-229 the chain carries N6-(pyridoxal phosphate)lysine. (6S)-5,6,7,8-tetrahydrofolate is bound by residues Glu-245 and 354-356 (SPF).

The protein belongs to the SHMT family. As to quaternary structure, homodimer. Pyridoxal 5'-phosphate serves as cofactor.

Its subcellular location is the cytoplasm. It catalyses the reaction (6R)-5,10-methylene-5,6,7,8-tetrahydrofolate + glycine + H2O = (6S)-5,6,7,8-tetrahydrofolate + L-serine. It functions in the pathway one-carbon metabolism; tetrahydrofolate interconversion. The protein operates within amino-acid biosynthesis; glycine biosynthesis; glycine from L-serine: step 1/1. Catalyzes the reversible interconversion of serine and glycine with tetrahydrofolate (THF) serving as the one-carbon carrier. This reaction serves as the major source of one-carbon groups required for the biosynthesis of purines, thymidylate, methionine, and other important biomolecules. Also exhibits THF-independent aldolase activity toward beta-hydroxyamino acids, producing glycine and aldehydes, via a retro-aldol mechanism. The chain is Serine hydroxymethyltransferase 1 from Vibrio cholerae serotype O1 (strain ATCC 39315 / El Tor Inaba N16961).